The sequence spans 540 residues: Alanine aminotransferase 2, mitochondrial (540 aa).

The N-terminal 46 residues, 1 to 46 (MRRFLINQAKGLVDHSRRQHHHKSPSFLSPQPRPLASSPPALSRFF), are a transit peptide targeting the mitochondrion. A disordered region spans residues 11–40 (GLVDHSRRQHHHKSPSFLSPQPRPLASSPP). Low complexity predominate over residues 28–40 (LSPQPRPLASSPP). The residue at position 357 (K357) is an N6-(pyridoxal phosphate)lysine.

Belongs to the class-I pyridoxal-phosphate-dependent aminotransferase family. Alanine aminotransferase subfamily. Homodimer. It depends on pyridoxal 5'-phosphate as a cofactor. Post-translationally, the N-terminus is blocked. As to expression, expressed in shoots, essentially in leaves and flowers, mostly in vascular tissues. Also detected in stems and roots.

It localises to the mitochondrion. The catalysed reaction is L-alanine + 2-oxoglutarate = pyruvate + L-glutamate. Its pathway is photosynthesis; C4 acid pathway. It participates in amino-acid degradation; L-alanine degradation via transaminase pathway; pyruvate from L-alanine: step 1/1. The chain is Alanine aminotransferase 2, mitochondrial (ALAAT2) from Arabidopsis thaliana (Mouse-ear cress).